The primary structure comprises 189 residues: Transcription factor FapR (189 aa).

This sequence belongs to the FapR family.

Functionally, transcriptional factor involved in regulation of membrane lipid biosynthesis by repressing genes involved in fatty acid and phospholipid metabolism. The polypeptide is Transcription factor FapR (Listeria innocua serovar 6a (strain ATCC BAA-680 / CLIP 11262)).